Consider the following 390-residue polypeptide: Multidrug resistance protein MdtL (390 aa).

Transmembrane regions (helical) follow at residues 4-24, 42-62, 69-89, 93-113, 131-151, 158-178, 199-221, 245-265, 269-289, 293-313, 316-336, and 353-375; these read FLIC…MYLV, IAFS…GKVA, PVAI…SRAT, LFLT…VVAF, LLNG…HLIM, SLFY…VFIL, LLNR…ILTF, ALTA…LSVF, TLML…SLSS, VTLF…GVAM, ALGP…IAQV, and ALNM…LMTI.

It belongs to the major facilitator superfamily. DHA1 family. MdtL (TC 2.A.1.2.22) subfamily.

The protein localises to the cell inner membrane. The protein is Multidrug resistance protein MdtL of Citrobacter koseri (strain ATCC BAA-895 / CDC 4225-83 / SGSC4696).